Consider the following 371-residue polypeptide: Putative glutamate--cysteine ligase 2 (371 aa).

The protein belongs to the glutamate--cysteine ligase type 2 family. YbdK subfamily.

The catalysed reaction is L-cysteine + L-glutamate + ATP = gamma-L-glutamyl-L-cysteine + ADP + phosphate + H(+). In terms of biological role, ATP-dependent carboxylate-amine ligase which exhibits weak glutamate--cysteine ligase activity. In Nitrosospira multiformis (strain ATCC 25196 / NCIMB 11849 / C 71), this protein is Putative glutamate--cysteine ligase 2.